The sequence spans 238 residues: Gem-associated protein 8 (238 aa).

The tract at residues 66-127 (AGHPWDSQGQ…LESDSDDEVE (62 aa)) is disordered. Composition is skewed to polar residues over residues 72–82 (SQGQHMAQQES) and 96–108 (LRNS…STRG). The span at 113–127 (CEEEELESDSDDEVE) shows a compositional bias: acidic residues. Ser-122 is subject to Phosphoserine. The stretch at 131-164 (SNMEITEELRQYFAQTERHREERRRQQQLDAERL) forms a coiled coil.

In terms of assembly, part of the core SMN complex that contains SMN1, GEMIN2/SIP1, DDX20/GEMIN3, GEMIN4, GEMIN5, GEMIN6, GEMIN7, GEMIN8 and STRAP/UNRIP. Part of the SMN-Sm complex that contains SMN1, GEMIN2/SIP1, DDX20/GEMIN3, GEMIN4, GEMIN5, GEMIN6, GEMIN7, GEMIN8, STRAP/UNRIP and the Sm proteins SNRPB, SNRPD1, SNRPD2, SNRPD3, SNRPE, SNRPF and SNRPG. Interacts with GEMIN6; the interaction is direct. Interacts with GEMIN7; the interaction is direct. Interacts with SMN1; the interaction is direct. Interacts with GEMIN4; the interaction is direct. Widely expressed in embryonic tissues (at protein level).

It localises to the nucleus. Its subcellular location is the gem. The protein localises to the cytoplasm. Functionally, the SMN complex catalyzes the assembly of small nuclear ribonucleoproteins (snRNPs), the building blocks of the spliceosome, and thereby plays an important role in the splicing of cellular pre-mRNAs. Most spliceosomal snRNPs contain a common set of Sm proteins SNRPB, SNRPD1, SNRPD2, SNRPD3, SNRPE, SNRPF and SNRPG that assemble in a heptameric protein ring on the Sm site of the small nuclear RNA to form the core snRNP (Sm core). In the cytosol, the Sm proteins SNRPD1, SNRPD2, SNRPE, SNRPF and SNRPG are trapped in an inactive 6S pICln-Sm complex by the chaperone CLNS1A that controls the assembly of the core snRNP. To assemble core snRNPs, the SMN complex accepts the trapped 5Sm proteins from CLNS1A forming an intermediate. Binding of snRNA inside 5Sm triggers eviction of the SMN complex, thereby allowing binding of SNRPD3 and SNRPB to complete assembly of the core snRNP. The protein is Gem-associated protein 8 (Gemin8) of Mus musculus (Mouse).